The following is a 397-amino-acid chain: Elongation factor Tu (397 aa).

The tr-type G domain occupies Leu10–Glu207. The interval Gly19–Thr26 is G1. Position 19-26 (Gly19–Thr26) interacts with GTP. Mg(2+) is bound at residue Thr26. A G2 region spans residues Gly60–Asn64. The G3 stretch occupies residues Asp81–Gly84. GTP-binding positions include Asp81–His85 and Asn136–Asp139. The tract at residues Asn136–Asp139 is G4. Residues Ser174–Arg176 are G5.

Belongs to the TRAFAC class translation factor GTPase superfamily. Classic translation factor GTPase family. EF-Tu/EF-1A subfamily. In terms of assembly, monomer.

The protein resides in the cytoplasm. It carries out the reaction GTP + H2O = GDP + phosphate + H(+). Functionally, GTP hydrolase that promotes the GTP-dependent binding of aminoacyl-tRNA to the A-site of ribosomes during protein biosynthesis. This Pseudomonas syringae pv. tomato (strain ATCC BAA-871 / DC3000) protein is Elongation factor Tu.